A 98-amino-acid polypeptide reads, in one-letter code: Defensin-A1 (98 aa).

Positions 1–19 are cleaved as a signal peptide; the sequence is MQTLSFLLALLFLVAQTPA. A propeptide spanning residues 20–62 is cleaved from the precursor; sequence QPTGEGEKGGTIQEPEATEAQDTAAVLMAAGAADGDDSDTKQL. 3 disulfide bridges follow: Cys-67–Cys-94, Cys-69–Cys-83, and Cys-73–Cys-93. A propeptide spanning residues 97 to 98 is cleaved from the precursor; the sequence is IK.

It belongs to the alpha-defensin family. Highly expressed in intestine, and expressed at lower levels in lung and spleen.

Its subcellular location is the secreted. In terms of biological role, has antimicrobial activity. This Ornithorhynchus anatinus (Duckbill platypus) protein is Defensin-A1.